A 254-amino-acid chain; its full sequence is Type III pantothenate kinase (254 aa).

6–13 (DVGNTNTT) lines the ATP pocket. Residues Y100 and 107–110 (GADR) contribute to the substrate site. Catalysis depends on D109, which acts as the Proton acceptor. D129 is a binding site for K(+). T132 provides a ligand contact to ATP. T184 provides a ligand contact to substrate.

This sequence belongs to the type III pantothenate kinase family. As to quaternary structure, homodimer. The cofactor is NH4(+). It depends on K(+) as a cofactor.

It localises to the cytoplasm. It carries out the reaction (R)-pantothenate + ATP = (R)-4'-phosphopantothenate + ADP + H(+). It functions in the pathway cofactor biosynthesis; coenzyme A biosynthesis; CoA from (R)-pantothenate: step 1/5. Its function is as follows. Catalyzes the phosphorylation of pantothenate (Pan), the first step in CoA biosynthesis. The sequence is that of Type III pantothenate kinase from Anaeromyxobacter dehalogenans (strain 2CP-C).